We begin with the raw amino-acid sequence, 505 residues long: Exodeoxyribonuclease 7 large subunit (505 aa).

The disordered stretch occupies residues 466-505 (SGDRDAVIDGEGGPAPAPTAPAPKPRPKPAAPPAGQGDLF). Positions 480–497 (APAPTAPAPKPRPKPAAP) are enriched in pro residues.

Belongs to the XseA family. As to quaternary structure, heterooligomer composed of large and small subunits.

The protein localises to the cytoplasm. It catalyses the reaction Exonucleolytic cleavage in either 5'- to 3'- or 3'- to 5'-direction to yield nucleoside 5'-phosphates.. In terms of biological role, bidirectionally degrades single-stranded DNA into large acid-insoluble oligonucleotides, which are then degraded further into small acid-soluble oligonucleotides. This is Exodeoxyribonuclease 7 large subunit from Caulobacter vibrioides (strain NA1000 / CB15N) (Caulobacter crescentus).